The primary structure comprises 451 residues: UPF0210 protein NMA1908 (451 aa).

The protein belongs to the UPF0210 family. Homodimer.

This Neisseria meningitidis serogroup A / serotype 4A (strain DSM 15465 / Z2491) protein is UPF0210 protein NMA1908.